The sequence spans 344 residues: 4-dimethylallyltryptophan N-methyltransferase easF (344 aa).

It belongs to the methyltransferase superfamily. In terms of assembly, homodimer.

It carries out the reaction 4-(3-methylbut-2-enyl)-L-tryptophan + S-adenosyl-L-methionine = 4-(3-methylbut-2-enyl)-L-abrine + S-adenosyl-L-homocysteine + H(+). The protein operates within alkaloid biosynthesis; ergot alkaloid biosynthesis. Its function is as follows. 4-dimethylallyltryptophan N-methyltransferase; part of the gene cluster that mediates the biosynthesis of fungal ergot alkaloid. DmaW catalyzes the first step of ergot alkaloid biosynthesis by condensing dimethylallyl diphosphate (DMAP) and tryptophan to form 4-dimethylallyl-L-tryptophan. The second step is catalyzed by the methyltransferase easF that methylates 4-dimethylallyl-L-tryptophan in the presence of S-adenosyl-L-methionine, resulting in the formation of 4-dimethylallyl-L-abrine. The catalase easC and the FAD-dependent oxidoreductase easE then transform 4-dimethylallyl-L-abrine to chanoclavine-I which is further oxidized by easD in the presence of NAD(+), resulting in the formation of chanoclavine-I aldehyde. Agroclavine dehydrogenase easG then mediates the conversion of chanoclavine-I aldehyde to agroclavine via a non-enzymatic adduct reaction: the substrate is an iminium intermediate that is formed spontaneously from chanoclavine-I aldehyde in the presence of glutathione. The presence of easA is not required to complete this reaction. Further conversion of agroclavine to paspalic acid is a two-step process involving oxidation of agroclavine to elymoclavine and of elymoclavine to paspalic acid, the second step being performed by the elymoclavine oxidase cloA. Paspalic acid is then further converted to D-lysergic acid. Ergopeptines are assembled from D-lysergic acid and three different amino acids by the D-lysergyl-peptide-synthetases composed each of a monomudular and a trimodular nonribosomal peptide synthetase subunit. LpsB and lpsC encode the monomodular subunits responsible for D-lysergic acid activation and incorporation into the ergopeptine backbone. LpsA1 and A2 subunits encode the trimodular nonribosomal peptide synthetase assembling the tripeptide portion of ergopeptines. LpsA1 is responsible for formation of the major ergopeptine, ergotamine, and lpsA2 for alpha-ergocryptine, the minor ergopeptine of the total alkaloid mixture elaborated by C.purpurea. D-lysergyl-tripeptides are assembled by the nonribosomal peptide synthetases and released as N-(D-lysergyl-aminoacyl)-lactams. Cyclolization of the D-lysergyl-tripeptides is performed by the Fe(2+)/2-ketoglutarate-dependent dioxygenase easH which introduces a hydroxyl group into N-(D-lysergyl-aminoacyl)-lactam at alpha-C of the aminoacyl residue followed by spontaneous condensation with the terminal lactam carbonyl group. The chain is 4-dimethylallyltryptophan N-methyltransferase easF from Claviceps purpurea (Ergot fungus).